A 353-amino-acid chain; its full sequence is Aromatic amino acid aminotransferase (353 aa).

K217 carries the N6-(pyridoxal phosphate)lysine modification.

The protein belongs to the class-II pyridoxal-phosphate-dependent aminotransferase family. As to quaternary structure, homodimer. It depends on pyridoxal 5'-phosphate as a cofactor.

The catalysed reaction is an aromatic L-alpha-amino acid + 2-oxoglutarate = an aromatic oxo-acid + L-glutamate. Functionally, aminotransferase that catalyzes the conversion of aromatic amino acids and 2-oxoglutarate into corresponding aromatic oxo acids and L-glutamate. This is Aromatic amino acid aminotransferase from Mycobacterium tuberculosis (strain ATCC 25177 / H37Ra).